The chain runs to 526 residues: Peptide chain release factor 3 (526 aa).

Positions 8–277 (DKRRTFAIIS…GLTQWAPKPQ (270 aa)) constitute a tr-type G domain. GTP contacts are provided by residues 17–24 (SHPDAGKT), 85–89 (DTPGH), and 139–142 (NKLD).

Belongs to the TRAFAC class translation factor GTPase superfamily. Classic translation factor GTPase family. PrfC subfamily.

It localises to the cytoplasm. Its function is as follows. Increases the formation of ribosomal termination complexes and stimulates activities of RF-1 and RF-2. It binds guanine nucleotides and has strong preference for UGA stop codons. It may interact directly with the ribosome. The stimulation of RF-1 and RF-2 is significantly reduced by GTP and GDP, but not by GMP. This chain is Peptide chain release factor 3, found in Actinobacillus succinogenes (strain ATCC 55618 / DSM 22257 / CCUG 43843 / 130Z).